The sequence spans 579 residues: Nif-specific regulatory protein (579 aa).

One can recognise a GAF domain in the interval 40–187 (DPVAEVPQIF…MVASLLEQAL (148 aa)). Positions 226 to 454 (IVGSSPAIAE…LENCVNRAAA (229 aa)) constitute a Sigma-54 factor interaction domain. Residues 254–261 (GESGTGKE) and 317–326 (ADGGTLFLDE) contribute to the ATP site. An inter-domain linker region spans residues 464-536 (EELACRQGAC…PLRTKTAQLS (73 aa)). Residues C468 and C473 each coordinate a divalent metal cation. Residues 502–529 (RVSAPPPEPAPAPEPAPEAPPREEVPLR) form a disordered region. 7 consecutive repeat copies span residues 505 to 506 (AP), 507 to 508 (PP), 509 to 510 (EP), 511 to 512 (AP), 513 to 514 (AP), 515 to 516 (EP), and 517 to 518 (AP). The tract at residues 505–518 (APPPEPAPAPEPAP) is 7 X 2 AA tandem repeats of X-P. The segment covering 505-520 (APPPEPAPAPEPAPEA) has biased composition (pro residues). A C-terminal DNA-binding domain region spans residues 537–579 (REELLRALESAGWVQAKAARLLGMTPRQIAYALQKFEIELRKI). A DNA-binding region (H-T-H motif) is located at residues 551-570 (QAKAARLLGMTPRQIAYALQ).

As to quaternary structure, interacts with sigma-54.

Required for activation of most nif operons, which are directly involved in nitrogen fixation. The chain is Nif-specific regulatory protein (nifA1) from Rhodobacter capsulatus (strain ATCC BAA-309 / NBRC 16581 / SB1003).